The following is a 555-amino-acid chain: T-complex protein 1 subunit eta (555 aa).

This sequence belongs to the TCP-1 chaperonin family. Heterooligomeric complex of about 850 to 900 kDa that forms two stacked rings, 12 to 16 nm in diameter.

Its subcellular location is the cytoplasm. In terms of biological role, molecular chaperone; assists the folding of proteins upon ATP hydrolysis. Known to play a role, in vitro, in the folding of actin and tubulin. This is T-complex protein 1 subunit eta (cct7) from Dictyostelium discoideum (Social amoeba).